The sequence spans 156 residues: Ribosomal RNA large subunit methyltransferase H (156 aa).

Residues Leu-73, Gly-104, and 123–128 (LGALTL) each bind S-adenosyl-L-methionine.

This sequence belongs to the RNA methyltransferase RlmH family. Homodimer.

Its subcellular location is the cytoplasm. The catalysed reaction is pseudouridine(1915) in 23S rRNA + S-adenosyl-L-methionine = N(3)-methylpseudouridine(1915) in 23S rRNA + S-adenosyl-L-homocysteine + H(+). Its function is as follows. Specifically methylates the pseudouridine at position 1915 (m3Psi1915) in 23S rRNA. The polypeptide is Ribosomal RNA large subunit methyltransferase H (Dichelobacter nodosus (strain VCS1703A)).